The sequence spans 78 residues: D-alanyl carrier protein (78 aa).

The 77-residue stretch at 1-77 (MAVKEEVVEI…KVIAKVESLI (77 aa)) folds into the Carrier domain. At S35 the chain carries O-(pantetheine 4'-phosphoryl)serine.

It belongs to the DltC family. In terms of processing, 4'-phosphopantetheine is transferred from CoA to a specific serine of apo-DCP.

It is found in the cytoplasm. It functions in the pathway cell wall biogenesis; lipoteichoic acid biosynthesis. Its function is as follows. Carrier protein involved in the D-alanylation of lipoteichoic acid (LTA). The loading of thioester-linked D-alanine onto DltC is catalyzed by D-alanine--D-alanyl carrier protein ligase DltA. The DltC-carried D-alanyl group is further transferred to cell membrane phosphatidylglycerol (PG) by forming an ester bond, probably catalyzed by DltD. D-alanylation of LTA plays an important role in modulating the properties of the cell wall in Gram-positive bacteria, influencing the net charge of the cell wall. The sequence is that of D-alanyl carrier protein from Leuconostoc citreum (strain KM20).